A 440-amino-acid chain; its full sequence is Thymidine phosphorylase (440 aa).

It belongs to the thymidine/pyrimidine-nucleoside phosphorylase family. In terms of assembly, homodimer.

The catalysed reaction is thymidine + phosphate = 2-deoxy-alpha-D-ribose 1-phosphate + thymine. The protein operates within pyrimidine metabolism; dTMP biosynthesis via salvage pathway; dTMP from thymine: step 1/2. In terms of biological role, the enzymes which catalyze the reversible phosphorolysis of pyrimidine nucleosides are involved in the degradation of these compounds and in their utilization as carbon and energy sources, or in the rescue of pyrimidine bases for nucleotide synthesis. This is Thymidine phosphorylase from Yersinia pseudotuberculosis serotype O:1b (strain IP 31758).